Consider the following 697-residue polypeptide: PHD finger protein At2g01810 (697 aa).

Disordered stretches follow at residues 319–362 (DENS…QYYS) and 457–478 (EQKR…TSTT). Over residues 339–349 (SGRDTVLDDHN) the composition is skewed to basic and acidic residues. Residues 635-685 (TVDCKCGARDDDGERMVACDACKVWHHTLCNSIEDDEAVPSVFLCNMCYGD) form a PHD-type zinc finger.

It is found in the nucleus. This chain is PHD finger protein At2g01810, found in Arabidopsis thaliana (Mouse-ear cress).